Consider the following 269-residue polypeptide: Tryptophan synthase alpha chain (269 aa).

Active-site proton acceptor residues include E49 and D60.

The protein belongs to the TrpA family. Tetramer of two alpha and two beta chains.

The catalysed reaction is (1S,2R)-1-C-(indol-3-yl)glycerol 3-phosphate + L-serine = D-glyceraldehyde 3-phosphate + L-tryptophan + H2O. It functions in the pathway amino-acid biosynthesis; L-tryptophan biosynthesis; L-tryptophan from chorismate: step 5/5. Its function is as follows. The alpha subunit is responsible for the aldol cleavage of indoleglycerol phosphate to indole and glyceraldehyde 3-phosphate. The sequence is that of Tryptophan synthase alpha chain from Paramagnetospirillum magneticum (strain ATCC 700264 / AMB-1) (Magnetospirillum magneticum).